The chain runs to 181 residues: Large ribosomal subunit protein uL10 (181 aa).

Belongs to the universal ribosomal protein uL10 family. Part of the ribosomal stalk of the 50S ribosomal subunit. The N-terminus interacts with L11 and the large rRNA to form the base of the stalk. The C-terminus forms an elongated spine to which L12 dimers bind in a sequential fashion forming a multimeric L10(L12)X complex.

Forms part of the ribosomal stalk, playing a central role in the interaction of the ribosome with GTP-bound translation factors. The sequence is that of Large ribosomal subunit protein uL10 from Acidobacterium capsulatum (strain ATCC 51196 / DSM 11244 / BCRC 80197 / JCM 7670 / NBRC 15755 / NCIMB 13165 / 161).